A 159-amino-acid chain; its full sequence is Ribosomal RNA large subunit methyltransferase H (159 aa).

S-adenosyl-L-methionine-binding positions include L76, G108, and 127–132; that span reads FGKLTL.

This sequence belongs to the RNA methyltransferase RlmH family. In terms of assembly, homodimer.

It is found in the cytoplasm. It catalyses the reaction pseudouridine(1915) in 23S rRNA + S-adenosyl-L-methionine = N(3)-methylpseudouridine(1915) in 23S rRNA + S-adenosyl-L-homocysteine + H(+). Functionally, specifically methylates the pseudouridine at position 1915 (m3Psi1915) in 23S rRNA. This Latilactobacillus sakei subsp. sakei (strain 23K) (Lactobacillus sakei subsp. sakei) protein is Ribosomal RNA large subunit methyltransferase H.